A 252-amino-acid polypeptide reads, in one-letter code: MHFRVVIPARYGSSRLPGKPLADIGGRPMVLHVLDRALQAGAESVVVATDDARVQAAVEAAGHQALLTSPDHQSGTERLVEVAETLGWPDDTLVVNVQGDEPLIDPALIREAARQLVVHTDAVMATLAHPIHDHADFVNPNVVKVVADEAGYAVYFSRAPIPWPRDAFAAEQPMPHEIGALRHIGLYAYRAGFLRTYASLASSPLERCEMLEQLRVLWHGYRISLGVTPTAPAPGVDTADDLARVRALFAAV.

This sequence belongs to the KdsB family.

It localises to the cytoplasm. It catalyses the reaction 3-deoxy-alpha-D-manno-oct-2-ulosonate + CTP = CMP-3-deoxy-beta-D-manno-octulosonate + diphosphate. It functions in the pathway nucleotide-sugar biosynthesis; CMP-3-deoxy-D-manno-octulosonate biosynthesis; CMP-3-deoxy-D-manno-octulosonate from 3-deoxy-D-manno-octulosonate and CTP: step 1/1. The protein operates within bacterial outer membrane biogenesis; lipopolysaccharide biosynthesis. Functionally, activates KDO (a required 8-carbon sugar) for incorporation into bacterial lipopolysaccharide in Gram-negative bacteria. This Thiobacillus denitrificans (strain ATCC 25259 / T1) protein is 3-deoxy-manno-octulosonate cytidylyltransferase.